A 481-amino-acid polypeptide reads, in one-letter code: Glucokinase-1 (481 aa).

The Hexokinase domain maps to 4 to 477; it reads PKLTKAVDSI…SGVGAALCAL (474 aa). The interval 64-204 is hexokinase small subdomain; sequence SGQEHGVTML…LSNVHVVALT (141 aa). Lys101 is a binding site for ATP. The tract at residues 146–172 is glucose-binding; sequence KMGFTFSYPVDQTSLSSGKLIRWTKGF. The segment at 205–466 is hexokinase large subdomain; the sequence is NDTTGTLLAR…RDVHLRISKD (262 aa). Position 466 to 471 (466 to 471) interacts with ATP; the sequence is DGSGVG.

It belongs to the hexokinase family.

The enzyme catalyses D-glucose + ATP = D-glucose 6-phosphate + ADP + H(+). The catalysed reaction is a D-hexose + ATP = a D-hexose 6-phosphate + ADP + H(+). It carries out the reaction D-mannose + ATP = D-mannose 6-phosphate + ADP + H(+). Its pathway is carbohydrate metabolism; hexose metabolism. The protein operates within carbohydrate degradation; glycolysis; D-glyceraldehyde 3-phosphate and glycerone phosphate from D-glucose: step 1/4. Glukokinase specific for aldohexoses. Phosphorylates glucose and mannose, but not fructose. The protein is Glucokinase-1 (GLK1) of Kluyveromyces lactis (strain ATCC 8585 / CBS 2359 / DSM 70799 / NBRC 1267 / NRRL Y-1140 / WM37) (Yeast).